A 91-amino-acid polypeptide reads, in one-letter code: DNA-directed RNA polymerase subunit omega (91 aa).

The protein belongs to the RNA polymerase subunit omega family. The RNAP catalytic core consists of 2 alpha, 1 beta, 1 beta' and 1 omega subunit. When a sigma factor is associated with the core the holoenzyme is formed, which can initiate transcription.

It carries out the reaction RNA(n) + a ribonucleoside 5'-triphosphate = RNA(n+1) + diphosphate. Its function is as follows. Promotes RNA polymerase assembly. Latches the N- and C-terminal regions of the beta' subunit thereby facilitating its interaction with the beta and alpha subunits. The protein is DNA-directed RNA polymerase subunit omega of Pseudoalteromonas translucida (strain TAC 125).